The sequence spans 645 residues: UvrABC system protein C (645 aa).

The disordered stretch occupies residues 1–20 (MTDLPPHSSHHPADQGEPLV). The GIY-YIG domain maps to 40-118 (YSPGVYRMLS…IKRMKPRFNI (79 aa)). The UVR domain maps to 228-263 (TELQQRLVAEMEQASQELNYERAASIRDRIRGFASI).

The protein belongs to the UvrC family. Interacts with UvrB in an incision complex.

It is found in the cytoplasm. The UvrABC repair system catalyzes the recognition and processing of DNA lesions. UvrC both incises the 5' and 3' sides of the lesion. The N-terminal half is responsible for the 3' incision and the C-terminal half is responsible for the 5' incision. The sequence is that of UvrABC system protein C from Gluconobacter oxydans (strain 621H) (Gluconobacter suboxydans).